Consider the following 373-residue polypeptide: Sodium-dependent organic anion transporter (373 aa).

The segment covering 1 to 15 has biased composition (polar residues); sequence MSTDCAGNSTCPVNS. A disordered region spans residues 1-21; sequence MSTDCAGNSTCPVNSTEEDPP. The Extracellular segment spans residues 1–32; it reads MSTDCAGNSTCPVNSTEEDPPVGMEGHANLKL. N-linked (GlcNAc...) asparagine glycans are attached at residues asparagine 8 and asparagine 14. Residues 33–53 form a helical membrane-spanning segment; sequence LFTVLSAVMVGLVMFSFGCSV. The Cytoplasmic segment spans residues 54-67; sequence ESQKLWLHLRRPWG. The helical transmembrane segment at 68-88 threads the bilayer; the sequence is IAVGLLSQFGLMPLTAYLLAI. The Extracellular segment spans residues 89-97; the sequence is GFGLKPFQA. A helical transmembrane segment spans residues 98–118; sequence IAVLMMGSCPGGTISNVLTFW. At 119–126 the chain is on the cytoplasmic side; sequence VDGDMDLS. Residues 127 to 147 traverse the membrane as a helical segment; it reads ISMTTCSTVAALGMMPLCLYI. Topologically, residues 148–157 are extracellular; that stretch reads YTRSWTLTQN. The chain crosses the membrane as a helical span at residues 158 to 178; that stretch reads LVIPYQSIGITLVSLVVPVAS. The Cytoplasmic segment spans residues 179-195; the sequence is GVYVNYRWPKQATVILK. A helical membrane pass occupies residues 196-216; sequence VGAILGGMLLLVVAVTGMVLA. Residues 217–224 lie on the Extracellular side of the membrane; that stretch reads KGWNTDVT. The helical transmembrane segment at 225-245 threads the bilayer; it reads LLVISCIFPLVGHVTGFLLAF. Topologically, residues 246–265 are cytoplasmic; it reads LTHQSWQRCRTISIETGAQN. Residues 266-283 form a helical membrane-spanning segment; sequence IQLCIAMLQLSFSAEYLV. Position 284 (glutamine 284) is a topological domain, extracellular. Residues 285–305 traverse the membrane as a helical segment; sequence LLNFALAYGLFQVLHGLLIVA. Topologically, residues 306–373 are cytoplasmic; it reads AYQAYKRRQK…ELTSHIPSCE (68 aa).

The protein belongs to the bile acid:sodium symporter (BASS) (TC 2.A.28) family. Glycosylated. In terms of tissue distribution, highest expression in lung and testis, moderate expression in heart, bladder and skin, and low expression in blood, liver, stomach, small intestine, spleen, kidney, adrenal gland, seminal vesicle, preputial gland, coagulating gland, lacrimal gland/eye, and brain.

Its subcellular location is the membrane. The enzyme catalyses estrone 3-sulfate(out) + 2 Na(+)(out) = estrone 3-sulfate(in) + 2 Na(+)(in). It catalyses the reaction 17beta-estradiol 3-sulfate(out) + 2 Na(+)(out) = 17beta-estradiol 3-sulfate(in) + 2 Na(+)(in). The catalysed reaction is dehydroepiandrosterone 3-sulfate(out) + 2 Na(+)(out) = dehydroepiandrosterone 3-sulfate(in) + 2 Na(+)(in). It carries out the reaction androst-5-ene-diol 3-sulfate(out) + 2 Na(+)(out) = androst-5-ene-diol 3-sulfate(in) + 2 Na(+)(in). The enzyme catalyses pregnenolone sulfate(out) + 2 Na(+)(out) = pregnenolone sulfate(in) + 2 Na(+)(in). It catalyses the reaction taurolithocholate 3-sulfate(out) + 2 Na(+)(out) = taurolithocholate 3-sulfate(in) + 2 Na(+)(in). The catalysed reaction is androsterone 3alpha-sulfate(out) + 2 Na(+)(out) = androsterone 3alpha-sulfate(in) + 2 Na(+)(in). It carries out the reaction 5alpha-dihydrotestosterone sulfate(out) + 2 Na(+)(out) = 5alpha-dihydrotestosterone sulfate(in) + 2 Na(+)(in). The enzyme catalyses 17beta-estradiol 17-sulfate(out) + 2 Na(+)(out) = 17beta-estradiol 17-sulfate(in) + 2 Na(+)(in). It catalyses the reaction 17alpha-hydroxypregnenolone 3-sulfate(out) + 2 Na(+)(out) = 17alpha-hydroxypregnenolone 3-sulfate(in) + 2 Na(+)(in). The catalysed reaction is epiandrosterone 3-sulfate(out) + 2 Na(+)(out) = epiandrosterone 3-sulfate(in) + 2 Na(+)(in). It carries out the reaction epitestosterone 17-sulfate(out) + 2 Na(+)(out) = epitestosterone 17-sulfate(in) + 2 Na(+)(in). The enzyme catalyses testosterone 17-sulfate(out) + 2 Na(+)(out) = testosterone 17-sulfate(in) + 2 Na(+)(in). It catalyses the reaction 16alpha-hydroxydehydroepiandrosterone 3-sulfate(out) + 2 Na(+)(out) = 16alpha-hydroxydehydroepiandrosterone 3-sulfate(in) + 2 Na(+)(in). Its function is as follows. Transports sulfoconjugated steroid hormones from the extracellular compartment into the cytosol in a sodium-dependent manner without hydrolysis. Steroid sulfate hormones are commonly considered to be biologically inactive metabolites, that may be activated by steroid sulfatases into free steroids. May play an important role by delivering sulfoconjugated steroids to specific target cells in reproductive organs. May play a role transporting the estriol precursor 16alpha-hydroxydehydroepiandrosterone 3-sulfate (16a-OH-DHEAS) at the fetal blood vessel endothelium. Can also transport other sulfoconjugated molecules such as taurolithocholic acid-3-sulfate and sulfoconjugated pyrenes. The sequence is that of Sodium-dependent organic anion transporter (Slc10a6) from Mus musculus (Mouse).